The chain runs to 889 residues: DNA mismatch repair protein MutS (889 aa).

Residue 641–648 coordinates ATP; that stretch reads GPNMAGKS.

The protein belongs to the DNA mismatch repair MutS family.

Its function is as follows. This protein is involved in the repair of mismatches in DNA. It is possible that it carries out the mismatch recognition step. This protein has a weak ATPase activity. This chain is DNA mismatch repair protein MutS, found in Orientia tsutsugamushi (strain Boryong) (Rickettsia tsutsugamushi).